The sequence spans 493 residues: WAS/WASL-interacting protein family member 1 (493 aa).

The span at 1–14 (MPVPPPPAPPPPPT) shows a compositional bias: pro residues. The segment at 1 to 493 (MPVPPPPAPP…GAPPLPPIPR (493 aa)) is disordered. The span at 21-31 (EKPTLNKTEQA) shows a compositional bias: polar residues. The region spanning 32-49 (GRNALLSDISKGKKLKKT) is the WH2 domain. An Asymmetric dimethylarginine modification is found at Arg-33. The binds actin stretch occupies residues 45-48 (KLKK). A compositionally biased stretch (gly residues) spans 67–105 (ASAGGYGGGGGGGGGGGGGGGGSGGNFGGGGPPGLGGLF). 2 positions are modified to omega-N-methylarginine: Arg-126 and Arg-135. Composition is skewed to pro residues over residues 142 to 155 (FSPP…PAPS), 162 to 175 (PPEP…PPRP), and 183 to 195 (SLPP…PRPV). Ser-143 carries the post-translational modification Phosphoserine. Position 227 is a phosphoserine (Ser-227). Composition is skewed to pro residues over residues 239-248 (FPRPPLPPTP), 274-290 (VPPP…PSTP), and 298-315 (APPP…PLPP). Residues Ser-330 and Ser-340 each carry the phosphoserine modification. The span at 336 to 361 (PPLPSPGRSGPLPPPPSERPPPPVRD) shows a compositional bias: pro residues. 3 XRSGPXPPXP motif repeats span residues 342–351 (GRSGPLPPPP), 364–373 (GRSGPLPPPP), and 400–409 (PRSGPRPPLP). Residues 403–424 (GPRPPLPPDRPGAGAPPPPPPS) are compositionally biased toward pro residues. The segment covering 425–434 (TSVRNGFQDS) has biased composition (polar residues). The span at 470–484 (ARNESRSGSNRRERG) shows a compositional bias: basic and acidic residues.

Belongs to the verprolin family. In terms of assembly, binds to WAS within the N-terminal region, at a site distinct from the CDC42-binding site. Binds profilin and actin. Binds to WASL. Interacts with DBNL. Interacts with DBNL. Interacts with FNBP1L (via the SH3 domain).

Its subcellular location is the cytoplasmic vesicle. The protein localises to the cytoplasm. It is found in the cytoskeleton. It localises to the cell projection. The protein resides in the ruffle. Its function is as follows. Plays a role in the reorganization of the actin cytoskeleton. Contributes with NCK1 and GRB2 in the recruitment and activation of WASL. May participate in regulating the subcellular localization of WASL, resulting in the disassembly of stress fibers in favor of filopodia formation. Plays a role in the formation of cell ruffles. The protein is WAS/WASL-interacting protein family member 1 (Wipf1) of Mus musculus (Mouse).